A 215-amino-acid chain; its full sequence is Pyrrolidone-carboxylate peptidase (215 aa).

Catalysis depends on residues E78, C141, and H165.

This sequence belongs to the peptidase C15 family. Homotetramer.

It localises to the cytoplasm. It carries out the reaction Release of an N-terminal pyroglutamyl group from a polypeptide, the second amino acid generally not being Pro.. In terms of biological role, removes 5-oxoproline from various penultimate amino acid residues except L-proline. The chain is Pyrrolidone-carboxylate peptidase (pcp) from Streptococcus pyogenes serotype M1.